A 367-amino-acid polypeptide reads, in one-letter code: Protein SGT1 homolog (367 aa).

TPR repeat units lie at residues 6-39 (ASDL…SPAT), 40-73 (AELY…DPSM), and 75-107 (KAYL…ASGD). One can recognise a CS domain in the interval 165 to 254 (KPKYRHDFYN…AEQITWTSLD (90 aa)). Disordered regions lie at residues 261-289 (AVPQ…DWDK) and 347-367 (VGSK…KWEY). Residues 277–367 (SYPSSKSKKD…DGMELKKWEY (91 aa)) enclose the SGS domain.

It belongs to the SGT1 family. Interacts (via CS domain) with RAR1 (via CHORD 2 domain). Interacts with RAD6. Expressed in roots, root tips, shoot apical meristem (SAM), young leaves, flag leaves and ears.

It localises to the cytoplasm. It is found in the nucleus. Involved in basal disease resistance to bacterial blight (X.oryzae). May act as positive regulator of basal defense. Probably required for SCF-mediated ubiquitination, by coupling HSP90 to SCF complex for ubiquitination of HSP90 client proteins. The polypeptide is Protein SGT1 homolog (Oryza sativa subsp. japonica (Rice)).